The following is an 87-amino-acid chain: Putative defensin-like protein 235 (87 aa).

A signal peptide spans Met1–Ala26. 3 disulfide bridges follow: Cys46/Cys73, Cys54/Cys82, and Cys71/Cys84.

Belongs to the DEFL family.

Its subcellular location is the secreted. This is Putative defensin-like protein 235 (SCRL26) from Arabidopsis thaliana (Mouse-ear cress).